The following is a 92-amino-acid chain: Acylphosphatase (92 aa).

The Acylphosphatase-like domain occupies 5 to 92; the sequence is CIAAYVYGVV…TPFETFKIRY (88 aa). Catalysis depends on residues R20 and N38.

It belongs to the acylphosphatase family.

The catalysed reaction is an acyl phosphate + H2O = a carboxylate + phosphate + H(+). The polypeptide is Acylphosphatase (acyP) (Yersinia enterocolitica serotype O:8 / biotype 1B (strain NCTC 13174 / 8081)).